We begin with the raw amino-acid sequence, 161 residues long: Allophycocyanin beta chain (161 aa).

Asn-71 carries the N4-methylasparagine modification. (2R,3E)-phycocyanobilin is bound at residue Cys-81.

Belongs to the phycobiliprotein family. Heterodimer of an alpha and a beta chain. Post-translationally, contains one covalently linked phycocyanobilin chromophore.

The protein localises to the cellular thylakoid membrane. Light-harvesting photosynthetic bile pigment-protein from the phycobiliprotein complex. Allophycocyanin has a maximum absorption at approximately 650 nanometers. This chain is Allophycocyanin beta chain (apcB), found in Anabaena cylindrica.